The primary structure comprises 22 residues: Peptide PGLa-R1 (22 aa).

Leucine amide is present on leucine 22.

Expressed by the skin glands.

Its subcellular location is the secreted. Its function is as follows. Antimicrobial peptide. This chain is Peptide PGLa-R1, found in Xenopus ruwenzoriensis (Uganda clawed frog).